The following is a 98-amino-acid chain: Small ribosomal subunit protein uS19 (98 aa).

Disordered regions lie at residues 1-30 (MARSIKKGPFADKHLTKKVEDANKGNKKSV) and 78-98 (RTFHGHSAEKKAAAAPAPAKK). Residues 9–24 (PFADKHLTKKVEDANK) are compositionally biased toward basic and acidic residues.

It belongs to the universal ribosomal protein uS19 family.

Functionally, protein S19 forms a complex with S13 that binds strongly to the 16S ribosomal RNA. The chain is Small ribosomal subunit protein uS19 from Anaeromyxobacter dehalogenans (strain 2CP-1 / ATCC BAA-258).